A 1228-amino-acid polypeptide reads, in one-letter code: Membrane-anchored lipid-binding protein LAM1 (1228 aa).

At 1–1062 the chain is on the cytoplasmic side; that stretch reads MHEHKAELRL…IFKCFSKVNK (1062 aa). Residues 308-421 form the PH domain; the sequence is EKGLSGWLYM…WINTLTSHKR (114 aa). In terms of domain architecture, VASt spans 773 to 978; that stretch reads EAWCYFQDNF…KTREYLKKFN (206 aa). Residues 1063–1083 form a helical membrane-spanning segment; sequence TLYYCLLISAVTNLFFVGKSI. Topologically, residues 1084–1228 are lumenal; sequence HSYFSVKSAE…EYNRLSAIPV (145 aa). Asparagine 1205 carries an N-linked (GlcNAc...) asparagine glycan.

Belongs to the SIP3 family.

Its subcellular location is the mitochondrion membrane. The protein resides in the endoplasmic reticulum membrane. Functionally, involved in mitochondrial fragmentation during programmed cell death in response to high levels of alpha-factor mating pheromone or the drug amiodarone. May be involved in sterol transfer between intracellular membranes. The polypeptide is Membrane-anchored lipid-binding protein LAM1 (Saccharomyces cerevisiae (strain ATCC 204508 / S288c) (Baker's yeast)).